Reading from the N-terminus, the 157-residue chain is Myosin essential light chain, striated adductor muscle (157 aa).

EF-hand domains follow at residues 7 to 44 (DEIDDLKDVFELFDFWDGRDGAVDAFKLGDVCRCLGIN) and 82 to 117 (GTFADYMEAFKTFDREGQGFISGAELRHVLTALGER).

In molluscan muscle, calcium regulation is associated with myosin rather than with actin. Muscle myosin contains two types of light chains: the catalytic light chain, essential for ATPase activity, and the regulatory light chain, a calcium-binding protein responsible for Ca(2+) dependent binding and Ca(2+) dependent Mg-ATPase activity. The protein is Myosin essential light chain, striated adductor muscle of Argopecten irradians (Bay scallop).